Consider the following 214-residue polypeptide: Metalloproteinase inhibitor 3 (214 aa).

The signal sequence occupies residues 1–26; it reads MSVCALTLILGCFLLFLGDISKPAEG. C27 provides a ligand contact to Zn(2+). Involved in metalloproteinase-binding stretches follow at residues 27–30 and 91–92; these read CTCA and ES. Disulfide bonds link C27–C94, C29–C121, C39–C146, C148–C195, C153–C158, and C166–C187. Residues 27–146 enclose the NTR domain; the sequence is CTCAPSHPQD…GLNHRYPLGC (120 aa).

Belongs to the protease inhibitor I35 (TIMP) family.

It localises to the secreted. It is found in the extracellular space. The protein localises to the extracellular matrix. Functionally, complexes with metalloproteinases (such as collagenases) and irreversibly inactivates them by binding to their catalytic zinc cofactor. May form part of a tissue-specific acute response to remodeling stimuli. This Xenopus laevis (African clawed frog) protein is Metalloproteinase inhibitor 3 (timp3).